The sequence spans 221 residues: Histone H1-like protein HC2 (221 aa).

Composition is skewed to basic residues over residues 1–50 (MLGV…KTVA) and 59–70 (PVAKKATAKKAP). The segment at 1–70 (MLGVQKKRST…AKKATAKKAP (70 aa)) is disordered.

It belongs to the histone H1/H5 family. HCT subfamily.

Might have a role in establishing the nucleoid structure of elementary bodies. This is Histone H1-like protein HC2 (hctB) from Chlamydia trachomatis serovar L2 (strain ATCC VR-902B / DSM 19102 / 434/Bu).